The chain runs to 159 residues: Crossover junction endodeoxyribonuclease RuvC (159 aa).

Active-site residues include aspartate 7, glutamate 67, and aspartate 139. Mg(2+) contacts are provided by aspartate 7, glutamate 67, and aspartate 139.

This sequence belongs to the RuvC family. In terms of assembly, homodimer which binds Holliday junction (HJ) DNA. The HJ becomes 2-fold symmetrical on binding to RuvC with unstacked arms; it has a different conformation from HJ DNA in complex with RuvA. In the full resolvosome a probable DNA-RuvA(4)-RuvB(12)-RuvC(2) complex forms which resolves the HJ. Requires Mg(2+) as cofactor.

It localises to the cytoplasm. The enzyme catalyses Endonucleolytic cleavage at a junction such as a reciprocal single-stranded crossover between two homologous DNA duplexes (Holliday junction).. In terms of biological role, the RuvA-RuvB-RuvC complex processes Holliday junction (HJ) DNA during genetic recombination and DNA repair. Endonuclease that resolves HJ intermediates. Cleaves cruciform DNA by making single-stranded nicks across the HJ at symmetrical positions within the homologous arms, yielding a 5'-phosphate and a 3'-hydroxyl group; requires a central core of homology in the junction. The consensus cleavage sequence is 5'-(A/T)TT(C/G)-3'. Cleavage occurs on the 3'-side of the TT dinucleotide at the point of strand exchange. HJ branch migration catalyzed by RuvA-RuvB allows RuvC to scan DNA until it finds its consensus sequence, where it cleaves and resolves the cruciform DNA. In Thermosynechococcus vestitus (strain NIES-2133 / IAM M-273 / BP-1), this protein is Crossover junction endodeoxyribonuclease RuvC.